Here is a 47-residue protein sequence, read N- to C-terminus: Large ribosomal subunit protein bL33 (47 aa).

The protein belongs to the bacterial ribosomal protein bL33 family.

The polypeptide is Large ribosomal subunit protein bL33 (Staphylococcus capitis).